Reading from the N-terminus, the 158-residue chain is Large ribosomal subunit protein uL13 (158 aa).

Belongs to the universal ribosomal protein uL13 family. In terms of assembly, part of the 50S ribosomal subunit.

In terms of biological role, this protein is one of the early assembly proteins of the 50S ribosomal subunit, although it is not seen to bind rRNA by itself. It is important during the early stages of 50S assembly. This chain is Large ribosomal subunit protein uL13, found in Rickettsia canadensis (strain McKiel).